The following is a 121-amino-acid chain: Large ribosomal subunit protein uL18 (121 aa).

This sequence belongs to the universal ribosomal protein uL18 family. As to quaternary structure, part of the 50S ribosomal subunit; part of the 5S rRNA/L5/L18/L25 subcomplex. Contacts the 5S and 23S rRNAs.

This is one of the proteins that bind and probably mediate the attachment of the 5S RNA into the large ribosomal subunit, where it forms part of the central protuberance. This chain is Large ribosomal subunit protein uL18, found in Burkholderia ambifaria (strain MC40-6).